The sequence spans 242 residues: uncharacterized protein (242 aa).

Residues 8-76 form the HTH gntR-type domain; sequence TPLYIQLKQI…QGKGTFVKSP (69 aa). The H-T-H motif DNA-binding region spans 36–55; the sequence is ENELCTKYNVSRITVRKAIL.

This is an uncharacterized protein from Bacillus subtilis (strain 168).